The sequence spans 662 residues: Methionine--tRNA ligase (662 aa).

The 'HIGH' region signature appears at 14–24 (YYPSGKLHLGS). The 'KMSKS' region signature appears at 308 to 312 (KMSKS). Residue K311 coordinates ATP. The tRNA-binding domain occupies 559–662 (DFEKIELKVA…DDVPAGSLIG (104 aa)).

This sequence belongs to the class-I aminoacyl-tRNA synthetase family. MetG type 2B subfamily. Homodimer.

Its subcellular location is the cytoplasm. It carries out the reaction tRNA(Met) + L-methionine + ATP = L-methionyl-tRNA(Met) + AMP + diphosphate. Its function is as follows. Is required not only for elongation of protein synthesis but also for the initiation of all mRNA translation through initiator tRNA(fMet) aminoacylation. In Lactococcus lactis subsp. lactis (strain IL1403) (Streptococcus lactis), this protein is Methionine--tRNA ligase (metG).